The chain runs to 261 residues: MIVNFISALGKQVIDFFRALGRAGFMLFGALIGKPQIRKHFPLLVKQMHVLGVQSLLIILLSGLFIGMVLGLQGYVVLIDFSAETSLGQLVALSLLRELGPVVTALLFAGRAGSALTAEIGLMKATEQLSSLEMMAVDPLRRVIAPRFWAGVISMPVLSILFIAIGIWGGSLVGVDWKGVDSGSFWSVMQNSVSWSYDILNGFIKAVFFAVAVTWIALFNGYDCMPTSEGISQATTRTVVHASLVVLGLDFILTAIMFGAG.

The Cytoplasmic portion of the chain corresponds to 1–12 (MIVNFISALGKQ). A helical membrane pass occupies residues 13-33 (VIDFFRALGRAGFMLFGALIG). At 34-49 (KPQIRKHFPLLVKQMH) the chain is on the periplasmic side. Residues 50-70 (VLGVQSLLIILLSGLFIGMVL) traverse the membrane as a helical segment. At 71–147 (GLQGYVVLID…DPLRRVIAPR (77 aa)) the chain is on the cytoplasmic side. The helical transmembrane segment at 148 to 168 (FWAGVISMPVLSILFIAIGIW) threads the bilayer. Residues 169–198 (GGSLVGVDWKGVDSGSFWSVMQNSVSWSYD) are Periplasmic-facing. Residues 199-219 (ILNGFIKAVFFAVAVTWIALF) traverse the membrane as a helical segment. At 220–238 (NGYDCMPTSEGISQATTRT) the chain is on the cytoplasmic side. Residues 239–259 (VVHASLVVLGLDFILTAIMFG) form a helical membrane-spanning segment. Residues 260-261 (AG) are Periplasmic-facing.

This sequence belongs to the MlaE permease family. As to quaternary structure, the complex is composed of two ATP-binding proteins (MlaF), two transmembrane proteins (MlaE), two cytoplasmic solute-binding proteins (MlaB) and six periplasmic solute-binding proteins (MlaD).

Its subcellular location is the cell inner membrane. Part of the ABC transporter complex MlaFEDB, which is involved in a phospholipid transport pathway that maintains lipid asymmetry in the outer membrane by retrograde trafficking of phospholipids from the outer membrane to the inner membrane. Probably responsible for the translocation of the substrate across the membrane. The polypeptide is Intermembrane phospholipid transport system permease protein MlaE (Haemophilus influenzae (strain ATCC 51907 / DSM 11121 / KW20 / Rd)).